We begin with the raw amino-acid sequence, 147 residues long: Allograft inflammatory factor 1 (147 aa).

Serine 2 is subject to N-acetylserine. N6-acetyllysine is present on lysine 11. The residue at position 39 (serine 39) is a Phosphoserine. 2 EF-hand domains span residues 45–80 (SKLE…LGVP) and 81–115 (KTHL…GKRS). Ca(2+)-binding residues include aspartate 58, asparagine 60, asparagine 62, aspartate 64, threonine 100, and aspartate 105. A disordered region spans residues 128-147 (AREKEKPTGPPAKKAISELP).

In terms of assembly, homodimer (Potential). Monomer. Interacts with LCP1. Phosphorylated on serine residues.

The protein resides in the cytoplasm. Its subcellular location is the cytoskeleton. It localises to the cell projection. It is found in the ruffle membrane. The protein localises to the phagocytic cup. Its function is as follows. Actin-binding protein that enhances membrane ruffling and RAC activation. Enhances the actin-bundling activity of LCP1. Binds calcium. Plays a role in RAC signaling and in phagocytosis. May play a role in macrophage activation and function. Promotes the proliferation of vascular smooth muscle cells and of T-lymphocytes. Enhances lymphocyte migration. Plays a role in vascular inflammation. This Macaca mulatta (Rhesus macaque) protein is Allograft inflammatory factor 1 (AIF1).